Here is a 126-residue protein sequence, read N- to C-terminus: Cystatin-like protein (126 aa).

Residues 72-76 (QVVAG) carry the Secondary area of contact motif. C94 and C115 form a disulfide bridge.

This sequence belongs to the cystatin family.

In Drosophila melanogaster (Fruit fly), this protein is Cystatin-like protein (Cys).